The sequence spans 320 residues: Methylenetetrahydrofolate dehydrogenase [NAD(+)] (320 aa).

The active site involves C152. Residues 187–188 (RS) and 210–211 (DI) contribute to the NAD(+) site.

This sequence belongs to the tetrahydrofolate dehydrogenase/cyclohydrolase family. As to quaternary structure, homodimer.

It localises to the cytoplasm. The protein resides in the nucleus. It catalyses the reaction (6R)-5,10-methylene-5,6,7,8-tetrahydrofolate + NAD(+) = (6R)-5,10-methenyltetrahydrofolate + NADH. It participates in one-carbon metabolism; tetrahydrofolate interconversion. Catalyzes oxidation of cytoplasmic one-carbon units for purine biosynthesis. The protein is Methylenetetrahydrofolate dehydrogenase [NAD(+)] (mtd1) of Schizosaccharomyces pombe (strain 972 / ATCC 24843) (Fission yeast).